A 406-amino-acid polypeptide reads, in one-letter code: 4-hydroxy-3-methylbut-2-en-1-yl diphosphate synthase (flavodoxin) (406 aa).

[4Fe-4S] cluster-binding residues include cysteine 297, cysteine 300, cysteine 343, and glutamate 350.

This sequence belongs to the IspG family. Homodimer. [4Fe-4S] cluster serves as cofactor.

The enzyme catalyses (2E)-4-hydroxy-3-methylbut-2-enyl diphosphate + oxidized [flavodoxin] + H2O + 2 H(+) = 2-C-methyl-D-erythritol 2,4-cyclic diphosphate + reduced [flavodoxin]. The protein operates within isoprenoid biosynthesis; isopentenyl diphosphate biosynthesis via DXP pathway; isopentenyl diphosphate from 1-deoxy-D-xylulose 5-phosphate: step 5/6. Converts 2C-methyl-D-erythritol 2,4-cyclodiphosphate (ME-2,4cPP) into 1-hydroxy-2-methyl-2-(E)-butenyl 4-diphosphate. The polypeptide is 4-hydroxy-3-methylbut-2-en-1-yl diphosphate synthase (flavodoxin) (Thermus thermophilus (strain ATCC BAA-163 / DSM 7039 / HB27)).